The sequence spans 303 residues: Pseudouridine-5'-phosphate glycosidase (303 aa).

Catalysis depends on Glu-24, which acts as the Proton donor. The substrate site is built by Lys-85 and Val-105. Mn(2+) is bound at residue Asp-137. Ser-139 to Asp-141 lines the substrate pocket. Lys-158 acts as the Nucleophile in catalysis.

Belongs to the pseudouridine-5'-phosphate glycosidase family. As to quaternary structure, homotrimer. The cofactor is Mn(2+).

It catalyses the reaction D-ribose 5-phosphate + uracil = psi-UMP + H2O. Catalyzes the reversible cleavage of pseudouridine 5'-phosphate (PsiMP) to ribose 5-phosphate and uracil. Functions biologically in the cleavage direction, as part of a pseudouridine degradation pathway. The protein is Pseudouridine-5'-phosphate glycosidase of Herpetosiphon aurantiacus (strain ATCC 23779 / DSM 785 / 114-95).